Reading from the N-terminus, the 416-residue chain is Solute carrier family 25 member 46 (416 aa).

The span at 1–13 (MQPRRPDRFDGLE) shows a compositional bias: basic and acidic residues. Residues 1 to 91 (MQPRRPDRFD…GEESSSSSSG (91 aa)) form a disordered region. Residues 37–49 (SFSSSGDLSQHWV) are compositionally biased toward polar residues. The span at 82–91 (GEESSSSSSG) shows a compositional bias: low complexity. The stretch at 94 to 185 (HLNRFAGFGI…GMLSEFTHLP (92 aa)) is one Solcar 1 repeat. 6 helical membrane-spanning segments follow: residues 101 to 121 (FGIG…CIVL), 161 to 181 (MGST…LSEF), 197 to 217 (IGGH…FYSA), 256 to 276 (LLPL…HYII), 312 to 332 (FPEL…LYPL), and 381 to 401 (LGFY…AIVL). A Solcar 2 repeat occupies 309–414 (EDYFPELIAN…KIIYSSVVQT (106 aa)).

Belongs to the mitochondrial carrier (TC 2.A.29) family.

The protein localises to the mitochondrion outer membrane. Functionally, may play a role in mitochondrial dynamics by controlling mitochondrial membrane fission. This chain is Solute carrier family 25 member 46 (slc25a46), found in Xenopus tropicalis (Western clawed frog).